Reading from the N-terminus, the 495-residue chain is UDP-N-acetylmuramate--L-alanine ligase (495 aa).

An ATP-binding site is contributed by 153 to 159; it reads GTHGKTT.

It belongs to the MurCDEF family.

It is found in the cytoplasm. It catalyses the reaction UDP-N-acetyl-alpha-D-muramate + L-alanine + ATP = UDP-N-acetyl-alpha-D-muramoyl-L-alanine + ADP + phosphate + H(+). Its pathway is cell wall biogenesis; peptidoglycan biosynthesis. Its function is as follows. Cell wall formation. The sequence is that of UDP-N-acetylmuramate--L-alanine ligase from Gloeothece citriformis (strain PCC 7424) (Cyanothece sp. (strain PCC 7424)).